The chain runs to 230 residues: Probable endonuclease C19F8.04c (230 aa).

The chain crosses the membrane as a helical span at residues A10–L27. A TNase-like domain is found at K55–Q216. The active site involves R104. A Ca(2+)-binding site is contributed by D109. Residues E112 and R152 contribute to the active site.

It belongs to the LCL3 family.

The protein resides in the mitochondrion. The protein localises to the membrane. The sequence is that of Probable endonuclease C19F8.04c from Schizosaccharomyces pombe (strain 972 / ATCC 24843) (Fission yeast).